The chain runs to 180 residues: ATP synthase subunit delta (180 aa).

It belongs to the ATPase delta chain family. F-type ATPases have 2 components, F(1) - the catalytic core - and F(0) - the membrane proton channel. F(1) has five subunits: alpha(3), beta(3), gamma(1), delta(1), epsilon(1). CF(0) has four main subunits: a(1), b(1), b'(1) and c(10-14). The alpha and beta chains form an alternating ring which encloses part of the gamma chain. F(1) is attached to F(0) by a central stalk formed by the gamma and epsilon chains, while a peripheral stalk is formed by the delta, b and b' chains.

The protein localises to the cellular thylakoid membrane. Its function is as follows. F(1)F(0) ATP synthase produces ATP from ADP in the presence of a proton or sodium gradient. F-type ATPases consist of two structural domains, F(1) containing the extramembraneous catalytic core and F(0) containing the membrane proton channel, linked together by a central stalk and a peripheral stalk. During catalysis, ATP synthesis in the catalytic domain of F(1) is coupled via a rotary mechanism of the central stalk subunits to proton translocation. Functionally, this protein is part of the stalk that links CF(0) to CF(1). It either transmits conformational changes from CF(0) to CF(1) or is implicated in proton conduction. The protein is ATP synthase subunit delta of Prochlorococcus marinus (strain MIT 9301).